The following is a 1475-amino-acid chain: Protein Shroom4 (1475 aa).

Residues 10 to 92 (YVPVQLQGGA…ILKLIVRRRN (83 aa)) form the PDZ domain. 2 disordered regions span residues 151–175 (EKSSSIGSMESLEQPGQPTYEGHLL) and 202–321 (CALS…PPRS). The segment covering 249–258 (TSTSHASSYS) has biased composition (polar residues). Basic and acidic residues predominate over residues 294-312 (EQHRASEPVDSLPQKEKPG). Position 412 is a phosphoserine (Ser412). 4 disordered regions span residues 432-523 (SKGM…PSAT), 542-577 (HTEASEEGDNEPKECGRLGGRRSGGPRGRSIQNRRR), 610-644 (NEAVEETQEPPESPPLSASNASLLPSYKNVPSPGD), and 658-688 (SECLSQASESSKARGGVEGRMSPGQRSGQSS). A compositionally biased stretch (basic and acidic residues) spans 471-485 (QTRKERKTTPLDDKL). A compositionally biased stretch (polar residues) spans 513–523 (SDLTSQQPSAT). Residues 542–557 (HTEASEEGDNEPKECG) are compositionally biased toward basic and acidic residues. Positions 558 to 568 (RLGGRRSGGPR) are enriched in gly residues. 2 stretches are compositionally biased toward low complexity: residues 624–635 (PLSASNASLLPS) and 658–667 (SECLSQASES). At Ser722 the chain carries Phosphoserine. 2 stretches are compositionally biased toward polar residues: residues 727-738 (AQPQVALSTEAP) and 775-791 (KSLSTSHLPGLTTHNNK). Disordered regions lie at residues 727–753 (AQPQVALSTEAPSNPDDSKELKTSTPQ) and 772–791 (ESSKSLSTSHLPGLTTHNNK). Ser1010 bears the Phosphoserine mark. Disordered stretches follow at residues 1022–1041 (SNKPEESSVYEDENSVASMP) and 1055–1185 (SLEP…QSLQ). Residues 1090–1099 (FPPPRPPPPN) show a composition bias toward pro residues. Residues 1110-1125 (QLQQQQQQQQQQQQQQ) show a composition bias toward low complexity. Residues 1128–1145 (EEEEEKEQEEEGEKEEDL) show a composition bias toward acidic residues. Residues 1149–1168 (YFSSELTGSCAPNTEEQPQS) show a composition bias toward polar residues. One can recognise an ASD2 domain in the interval 1190–1469 (FALHPSNFVP…QLKCLKESLH (280 aa)). A coiled-coil region spans residues 1380–1470 (SESNQEKLVL…LKCLKESLHL (91 aa)).

The protein belongs to the shroom family. As to quaternary structure, interacts directly with F-actin. As to expression, detected in most adult tissues examined. Expressed in brain, lung, heart, liver, kidney, muscle and ovary. Expressed throughout the brain, with high expression in the brain stem and cerebellum and weaker expression in the hypothalamus, the hippocampus and the olfactory bulb. Expressed in wide range of cell types during development, including vascular endothelium and the polarized epithelium of the neural tube and kidney.

It localises to the cytoplasm. The protein localises to the cytoskeleton. In terms of biological role, probable regulator of cytoskeletal architecture that plays an important role in development. May regulate cellular and cytoskeletal architecture by modulating the spatial distribution of myosin II. The protein is Protein Shroom4 (Shroom4) of Mus musculus (Mouse).